We begin with the raw amino-acid sequence, 87 residues long: U3-theraphotoxin-Cg1b (87 aa).

An N-terminal signal peptide occupies residues 1–23 (MRTLTLIAIVTCAALVIFHAAAA). Residues 24-48 (EELEAQDVIQPEDIFTGVATLEEDR) constitute a propeptide that is removed on maturation. Disulfide bonds link Cys52-Cys65, Cys56-Cys79, and Cys73-Cys84.

Belongs to the neurotoxin 12 (Hwtx-2) family. 03 (juruin) subfamily. Expressed by the venom gland.

It localises to the secreted. Functionally, probable ion channel inhibitor. This is U3-theraphotoxin-Cg1b from Chilobrachys guangxiensis (Chinese earth tiger tarantula).